The sequence spans 81 residues: U12-hexatoxin-Mg1a (81 aa).

The N-terminal stretch at 1–24 (MKAPATIVILIMSLISVLWATADT) is a signal peptide. The propeptide occupies 25 to 50 (EDGNLLFPIEDFIRKFDEYPVQPKER). Intrachain disulfides connect cysteine 52–cysteine 66, cysteine 59–cysteine 71, and cysteine 65–cysteine 75. Proline 78 bears the Proline amide mark.

Expressed by the venom gland.

The protein localises to the secreted. Its function is as follows. Blocks voltage-gated sodium channels (Nav). Intracranial injection into mice causes lacrimation, slow breathing and death. Intrathorax injection into crickets causes death. The sequence is that of U12-hexatoxin-Mg1a from Macrothele gigas (Japanese funnel web spider).